Reading from the N-terminus, the 577-residue chain is MNIQALLSEKVSQAMIVAGAPANCEPQVRQSAKVQFGDYQANGMMAVAKKLGMAPRQLAEQVLTHLDLNGIASKVEIAGPGFINIFLDPAFLAEHVQQALASERLGVAKPAKQTVVIDYSAPNVAKEMHVGHLRSTIIGDAAVRTLEFLGHHVIRANHVGDWGTQFGMLIAWLEKQQQENAGEMALADLEGFYRDAKKHYDEDEAFAERARNYVVKLQGGDPYFLDMWRKLVDITMTQNQITYNRLNVTLTRDDVMGESLYNPMLPGIVADLKAQGLAVESEGATVVFLDEYKNKEGEPMGVIIQKKDGGYLYTTTDIACAKYRYETLHADRVLYYIDSRQHQHLMQAWTIVRKAGYVPDSVPLEHHMFGMMLGKDGKPFKTRAGGTVKLADLLDEALERARRLVAEKNPDMPADELEKLANAVGIGAVKYADLSKNRTTDYIFDWDNMLAFEGNTAPYMQYAYTRVLSVFRKAEIDESALSSAPVVIREDREAQLAARLLQFEETLTVVAREGTPHVMCAYLYDIAGLFSGFYEHCPILSAENEEVRNSRLKLAQLTAKTLKLGLDTLGIETVERM.

Residues 122-132 (PNVAKEMHVGH) carry the 'HIGH' region motif.

The protein belongs to the class-I aminoacyl-tRNA synthetase family. As to quaternary structure, monomer.

The protein localises to the cytoplasm. The enzyme catalyses tRNA(Arg) + L-arginine + ATP = L-arginyl-tRNA(Arg) + AMP + diphosphate. The protein is Arginine--tRNA ligase of Citrobacter koseri (strain ATCC BAA-895 / CDC 4225-83 / SGSC4696).